The chain runs to 1608 residues: Adenylate cyclase type 10 (1608 aa).

Guanylate cyclase domains are found at residues V42–Q179 and T293–M418. Mg(2+)-binding residues include D47 and I48. Residue D47–T52 participates in ATP binding. K95 serves as a coordination point for hydrogencarbonate. Residue D99 participates in Mg(2+) binding. ATP contacts are provided by D99 and K144. 3 residues coordinate hydrogencarbonate: V167, R176, and M337. ATP-binding positions include V406 and N412 to R416.

It belongs to the adenylyl cyclase class-4/guanylyl cyclase family. Requires Mg(2+) as cofactor. Mn(2+) is required as a cofactor. In terms of processing, cleavage may occur to generate the active 48 kDa form. As to expression, detected in testis (at protein level). Preferentially expressed in testis.

Its subcellular location is the cell membrane. It localises to the cytoplasm. The protein resides in the cytoskeleton. The protein localises to the perinuclear region. It is found in the nucleus. Its subcellular location is the cell projection. It localises to the cilium. The protein resides in the mitochondrion. The catalysed reaction is ATP = 3',5'-cyclic AMP + diphosphate. Activated by manganese or magnesium ions. In the presence of magnesium ions, the enzyme is activated by bicarbonate. Calcium mildly increases the enzyme activity, also in the presence of magnesium ions. Catalyzes the formation of the signaling molecule cAMP. May function as sensor that mediates responses to changes in cellular bicarbonate and CO(2) levels. Has a critical role in mammalian spermatogenesis by producing the cAMP which regulates cAMP-responsive nuclear factors indispensable for sperm maturation in the epididymis. Induces capacitation, the maturational process that sperm undergo prior to fertilization. Involved in ciliary beat regulation. The polypeptide is Adenylate cyclase type 10 (Adcy10) (Rattus norvegicus (Rat)).